The sequence spans 273 residues: MHVPGTRAKMSSIFAYQSSEVDWCESNFQHSELVAEFYNTFSNVFFLIFGPLMMFLMHPYAQKRTRCFYGVSVLFMLIGLFSMYFHMTLSFLGQLLDEISILWLLASGYSVWLPRCYFPKFVKGNRFYFSCLVTITTIISTFLTFVKPTVNAYALNSIAIHILYIVRTEYKKIRDDDLRHLIAVSVVLWAAALTSWISDRVLCSFWQRIHFYYLHSIWHVLISITFPYGIVTMALVDAKYEMPDKTLKVHYWPRDSWVIGLPYVEIQENDKNC.

The Lumenal portion of the chain corresponds to 1–36 (MHVPGTRAKMSSIFAYQSSEVDWCESNFQHSELVAE). Ca(2+)-binding residues include Asp22, Trp23, Glu25, Asn27, and Glu36. The helical transmembrane segment at 37–57 (FYNTFSNVFFLIFGPLMMFLM) threads the bilayer. At 58-72 (HPYAQKRTRCFYGVS) the chain is on the cytoplasmic side. 2 consecutive transmembrane segments (helical) span residues 73–93 (VLFM…SFLG) and 94–114 (QLLD…VWLP). Position 86 (His86) interacts with Zn(2+). Residues 115-126 (RCYFPKFVKGNR) lie on the Cytoplasmic side of the membrane. Residues 127 to 147 (FYFSCLVTITTIISTFLTFVK) form a helical membrane-spanning segment. Over 148–149 (PT) the chain is Lumenal. A helical transmembrane segment spans residues 150–167 (VNAYALNSIAIHILYIVR). The Cytoplasmic portion of the chain corresponds to 168–177 (TEYKKIRDDD). The helical transmembrane segment at 178-198 (LRHLIAVSVVLWAAALTSWIS) threads the bilayer. The Lumenal segment spans residues 199-215 (DRVLCSFWQRIHFYYLH). Zn(2+) is bound by residues His215 and His219. Residues 216-236 (SIWHVLISITFPYGIVTMALV) form a helical membrane-spanning segment. At 237-273 (DAKYEMPDKTLKVHYWPRDSWVIGLPYVEIQENDKNC) the chain is on the cytoplasmic side.

The protein belongs to the alkaline ceramidase family. Requires Zn(2+) as cofactor. Highly expressed in skin. Weakly or not expressed in other tissues. Expressed by granular layer of interfollicular epidermis, sebaceous glands and infundibulum.

It localises to the endoplasmic reticulum membrane. The catalysed reaction is an N-acylsphing-4-enine + H2O = sphing-4-enine + a fatty acid. The enzyme catalyses N-tetracosanoyl-sphing-4-enine + H2O = tetracosanoate + sphing-4-enine. It catalyses the reaction an N-acylsphinganine + H2O = sphinganine + a fatty acid. It carries out the reaction N-(9Z-octadecenoyl)-sphing-4-enine + H2O = sphing-4-enine + (9Z)-octadecenoate. The catalysed reaction is N-(15Z-tetracosenoyl)-sphing-4-enine + H2O = (15Z)-tetracosenoate + sphing-4-enine. Its pathway is lipid metabolism; sphingolipid metabolism. With respect to regulation, inhibited by sphingosine. Inhibited by Mn(2+), Zn(2+), and Cu(2+) in a dose-dependent manner. Slightly activated by Ca(2+) in a dose-dependent manner. In terms of biological role, endoplasmic reticulum ceramidase that catalyzes the hydrolysis of ceramides into sphingosine and free fatty acids at alkaline pH. Ceramides, sphingosine, and its phosphorylated form sphingosine-1-phosphate are bioactive lipids that mediate cellular signaling pathways regulating several biological processes including cell proliferation, apoptosis and differentiation. Exhibits a strong substrate specificity towards the natural stereoisomer of ceramides with D-erythro-sphingosine as a backbone and has a higher activity towards very long-chain unsaturated fatty acids like the C24:1-ceramide. May also hydrolyze dihydroceramides to produce dihydrosphingosine. ACER1 is a skin-specific ceramidase that regulates the levels of ceramides, sphingosine and sphingosine-1-phosphate in the epidermis, mediates the calcium-induced differentiation of epidermal keratinocytes and more generally plays an important role in skin homeostasis. This is Alkaline ceramidase 1 from Mus musculus (Mouse).